The following is a 673-amino-acid chain: Annexin A6 (673 aa).

Position 2 is an N-acetylalanine (Ala2). Ser13 bears the Phosphoserine mark. Annexin repeat units lie at residues 20-91 (FNPS…GLMR), 92-163 (PPAY…VLLQ), 175-247 (DLVQ…AVVK), 251-322 (STAE…KLCG), 363-434 (FNPD…GLMM), 435-506 (PPAH…SLAT), 521-595 (EDAQ…AIVQ), and 599-670 (NKPL…AICG). A Phosphotyrosine modification is found at Tyr30. Lys63, Lys68, Lys75, and Lys81 each carry N6-acetyllysine. Tyr201 carries the phosphotyrosine modification. N6-acetyllysine is present on residues Lys306, Lys370, and Lys418. At Ser422 the chain carries Phosphoserine. Position 483 is an N6-acetyllysine (Lys483). At Ser537 the chain carries Phosphoserine. N6-acetyllysine is present on Lys620.

It belongs to the annexin family. In terms of processing, phosphorylated in response to growth factor stimulation.

Its subcellular location is the cytoplasm. It is found in the melanosome. In terms of biological role, may associate with CD21. May regulate the release of Ca(2+) from intracellular stores. The protein is Annexin A6 (ANXA6) of Bos taurus (Bovine).